The sequence spans 1228 residues: AT-rich interactive domain-containing protein 4B (1228 aa).

Disordered regions lie at residues 123-167 and 266-307; these read LPLT…DDRK and KTEL…PFPE. 3 positions are modified to phosphoserine: Ser276, Ser295, and Ser296. Residues 277–305 show a composition bias toward acidic residues; the sequence is EAEEEEEEEDDEKEKEDNSSEEEEEIEPF. Residues 306–398 form the ARID domain; that stretch reads PEERENFLQQ…YLYGFEEYCR (93 aa). Glycyl lysine isopeptide (Lys-Gly) (interchain with G-Cter in SUMO2) cross-links involve residues Lys428 and Lys461. Basic and acidic residues predominate over residues 437–464; sequence EVNVEDSKNMIPKEETPAEDESERKENI. Disordered regions lie at residues 437-466, 479-525, 539-606, 620-802, 825-1129, and 1168-1204; these read EVNV…NIKP, PAQS…EQAR, RPAD…SDTG, LQAS…EEKR, LNNS…RLPK, and SEVA…SITA. The residue at position 482 (Ser482) is a Phosphoserine. Over residues 483-511 the composition is skewed to basic and acidic residues; that stretch reads DQEKEANITKLEEKESLEDKDGATARAEE. Over residues 546–555 the composition is skewed to basic residues; sequence PKIKHRKKIK. The segment covering 556 to 569 has biased composition (basic and acidic residues); that stretch reads NKLDKEKDRDEKYS. Phosphoserine is present on residues Ser579, Ser581, and Ser588. Positions 596–606 are enriched in basic and acidic residues; that stretch reads DLADAKNSDTG. A Phosphoserine modification is found at Ser630. Basic and acidic residues-rich tracts occupy residues 635-667 and 691-700; these read ERCA…KEEL and SPERLRKDVE. Lys664 participates in a covalent cross-link: Glycyl lysine isopeptide (Lys-Gly) (interchain with G-Cter in SUMO2). Phosphoserine occurs at positions 691 and 703. Over residues 701-713 the composition is skewed to acidic residues; the sequence is AISEDTDFEEEDE. Thr706 carries the post-translational modification Phosphothreonine. Over residues 721–730 the composition is skewed to basic and acidic residues; sequence VKKDTTDKAL. Polar residues predominate over residues 744–753; it reads IQTNCLQSGS. 3 stretches are compositionally biased toward basic and acidic residues: residues 755–765, 825–843, and 911–926; these read GKKEDRTKSKE, LNNS…RKDV, and KPVE…RKTE. Residues 927–937 show a composition bias toward polar residues; that stretch reads FPSSGSNSVLN. Ser930 is subject to Phosphoserine. Position 942 is a phosphothreonine (Thr942). Residues 944–965 are compositionally biased toward low complexity; the sequence is ESPSSVTVTETSQQQSSVTVSV. At Ser945 the chain carries Phosphoserine. The segment covering 972–981 has biased composition (basic and acidic residues); the sequence is EEVRSIKSET. Positions 1003–1017 are enriched in low complexity; the sequence is SSPAGFNASVSSSSS. Residues 1046 to 1064 are compositionally biased toward basic residues; the sequence is KKQKRSHKATVVNNKKKGK. Thr1066 carries the post-translational modification Phosphothreonine. A phosphoserine mark is found at Ser1068, Ser1069, Ser1071, and Ser1075. Over residues 1112 to 1124 the composition is skewed to basic and acidic residues; that stretch reads KNGDKDPDLKEPS. The stretch at 1141–1186 forms a coiled coil; sequence ENMTSAERISILQEKLQEIRKHYLSLKSEVASIDRRRKRLKKKERE. The segment covering 1188–1204 has biased composition (low complexity); sequence AATSSSSSSPSSSSITA.

As to quaternary structure, component of a Sin3A corepressor complex consisting of SIN3A, SAP130, SUDS3/SAP45, SAP180, HDAC1 and HDAC2. Interacts with ARID4A. Interacts with AR.

It is found in the nucleus. In terms of biological role, acts as a transcriptional repressor. May function in the assembly and/or enzymatic activity of the Sin3A corepressor complex or in mediating interactions between the complex and other regulatory complexes. Plays a role in the regulation of epigenetic modifications at the PWS/AS imprinting center near the SNRPN promoter, where it might function as part of a complex with RB1 and ARID4A. Involved in spermatogenesis, together with ARID4A, where it functions as a transcriptional coactivator for AR (androgen receptor) and enhances expression of genes required for sperm maturation. Regulates expression of the tight junction protein CLDN3 in the testis, which is important for integrity of the blood-testis barrier. Plays a role in myeloid homeostasis where it regulates the histone methylation state of bone marrow cells and expression of various genes involved in hematopoiesis. May function as a leukemia suppressor. The sequence is that of AT-rich interactive domain-containing protein 4B (Arid4b) from Rattus norvegicus (Rat).